Here is a 105-residue protein sequence, read N- to C-terminus: Small ribosomal subunit protein uS10 (105 aa).

The protein belongs to the universal ribosomal protein uS10 family. As to quaternary structure, part of the 30S ribosomal subunit.

Involved in the binding of tRNA to the ribosomes. The protein is Small ribosomal subunit protein uS10 of Arthrospira platensis (Spirulina platensis).